The primary structure comprises 161 residues: Regulatory protein RecX (161 aa).

Belongs to the RecX family.

Its subcellular location is the cytoplasm. In terms of biological role, modulates RecA activity. The protein is Regulatory protein RecX of Halorhodospira halophila (strain DSM 244 / SL1) (Ectothiorhodospira halophila (strain DSM 244 / SL1)).